A 526-amino-acid chain; its full sequence is MFS-type transporter clz19 (526 aa).

Positions Met-1–His-49 are disordered. The segment covering Ser-32–His-49 has biased composition (basic and acidic residues). A glycan (N-linked (GlcNAc...) asparagine) is linked at Asn-38. A helical membrane pass occupies residues Ala-59–Tyr-79. Asn-97 carries N-linked (GlcNAc...) asparagine glycosylation. A run of 3 helical transmembrane segments spans residues Val-126–Leu-143, Ala-186–Leu-206, and Ala-214–Phe-234. Residues Asn-238 and Asn-253 are each glycosylated (N-linked (GlcNAc...) asparagine). 6 helical membrane-spanning segments follow: residues Phe-294–Phe-314, Tyr-322–Leu-342, Leu-384–Leu-404, Val-411–Ala-431, Ala-446–Val-466, and Ile-473–Leu-493.

It belongs to the major facilitator superfamily.

It localises to the membrane. MFS-type transporter; part of the gene cluster that mediates the biosynthesis of squalestatin S1 (SQS1, also known as zaragozic acid A), a heavily oxidized fungal polyketide that offers potent cholesterol lowering activity by targeting squalene synthase (SS). The polypeptide is MFS-type transporter clz19 (Cochliobolus lunatus (Filamentous fungus)).